Here is a 538-residue protein sequence, read N- to C-terminus: NAD(P)H-quinone oxidoreductase chain 4 (538 aa).

14 helical membrane-spanning segments follow: residues 11 to 31 (FPWL…VPFI), 43 to 63 (YALI…FKGF), 95 to 115 (MPLI…AWPV), 119 to 139 (PKLF…VFAV), 143 to 163 (LLFF…LAIW), 175 to 195 (FIIY…AMGF), 217 to 237 (GFQL…LPIV), 251 to 271 (TAPV…YALL), 285 to 305 (FAPL…LTSF), 314 to 334 (IAYS…SFSS), 340 to 360 (AMLQ…LVGA), 382 to 404 (IMFA…SGFI), 425 to 445 (IVVA…LLSM), and 472 to 492 (IYII…PKIM).

The protein belongs to the complex I subunit 4 family.

Its subcellular location is the cellular thylakoid membrane. It catalyses the reaction a plastoquinone + NADH + (n+1) H(+)(in) = a plastoquinol + NAD(+) + n H(+)(out). It carries out the reaction a plastoquinone + NADPH + (n+1) H(+)(in) = a plastoquinol + NADP(+) + n H(+)(out). Its function is as follows. NDH-1 shuttles electrons from NAD(P)H, via FMN and iron-sulfur (Fe-S) centers, to quinones in the respiratory chain. The immediate electron acceptor for the enzyme in this species is believed to be plastoquinone. Couples the redox reaction to proton translocation (for every two electrons transferred, four hydrogen ions are translocated across the cytoplasmic membrane), and thus conserves the redox energy in a proton gradient. This chain is NAD(P)H-quinone oxidoreductase chain 4, found in Prochlorococcus marinus (strain NATL1A).